We begin with the raw amino-acid sequence, 356 residues long: Uroporphyrinogen decarboxylase (356 aa).

Coproporphyrinogen I is bound by residues Arg-33, Ala-35, Arg-37, Arg-46, Asp-82, Tyr-159, Ser-214, and His-334. Coproporphyrinogen III contacts are provided by Arg-33, Ala-35, and Arg-37. Coproporphyrinogen III is bound by residues Asp-82, Tyr-159, Ser-214, and His-334.

It belongs to the uroporphyrinogen decarboxylase family. Homodimer.

It is found in the cytoplasm. It localises to the cytosol. It carries out the reaction uroporphyrinogen III + 4 H(+) = coproporphyrinogen III + 4 CO2. It participates in porphyrin-containing compound metabolism; protoporphyrin-IX biosynthesis; coproporphyrinogen-III from 5-aminolevulinate: step 4/4. Its function is as follows. Catalyzes the decarboxylation of four acetate groups of uroporphyrinogen-III to yield coproporphyrinogen-III. In Drosophila melanogaster (Fruit fly), this protein is Uroporphyrinogen decarboxylase.